A 188-amino-acid chain; its full sequence is MSTRAPVELDFLGLRAAAADADDRHAKSGGSSASSSSSIRGMETSAIARIGPHLLRRVIAAARPPPPPSTAPVPEEMPGAAAAAAPMTLFYNGSVAVFDVSHDKAEAIMRMATEATKAKGLARGNAIVGNFAKEPLTRTKSLQRFLSKRKERLTSLGPYQVGGPAAVGATTSTTTKSFLAKEEEHTAS.

Positions 20–41 (DADDRHAKSGGSSASSSSSIRG) are disordered. Over residues 28–38 (SGGSSASSSSS) the composition is skewed to low complexity. The region spanning 80–114 (AAAAAAPMTLFYNGSVAVFDVSHDKAEAIMRMATE) is the Tify domain. A Jas motif is present at residues 135 to 160 (PLTRTKSLQRFLSKRKERLTSLGPYQ). The segment at 156–188 (LGPYQVGGPAAVGATTSTTTKSFLAKEEEHTAS) is disordered. Positions 179–188 (LAKEEEHTAS) are enriched in basic and acidic residues.

Belongs to the TIFY/JAZ family. Ubiquitinated. Targeted for degradation by the SCF(COI1) E3 ubiquitin ligase-proteasome pathway during jasmonate signaling.

In terms of biological role, repressor of jasmonate responses. This Oryza sativa subsp. indica (Rice) protein is Protein TIFY 9.